Reading from the N-terminus, the 89-residue chain is Small ribosomal subunit protein uS19 (89 aa).

It belongs to the universal ribosomal protein uS19 family.

Its function is as follows. Protein S19 forms a complex with S13 that binds strongly to the 16S ribosomal RNA. This chain is Small ribosomal subunit protein uS19, found in Vesicomyosocius okutanii subsp. Calyptogena okutanii (strain HA).